The following is a 426-amino-acid chain: MAGGHRLLLENARQVVLVCARGERFLTRDALRSLEVLEGASLVVGTDGFIKAIGPADAIQKQFSEETFEERIDCSGKCILPGLVDAHTHPVWAGERVHEFAMKLAGATYMDIHQAGGGINFTVERTRQASEEELYSSFQQRLGCMMRAGTTLVECKSGYGLNLETELKMLRVIERARQELDIGISATYCGAHSVPKGKTASEAADDIIKNHLPRLKELGRNGEIHVDNIDVFCEKDVFDLDSTRRILQSGKDIGLQINFHGDELHPMKAAELGVELGAQAISHLEEVSDEGIAAMASARCSAVLLPTTAYMLRLKQPRARKMLDEGVIVALGSDFNPNAYCFSMPMVMHLACVNMRMSMPEALAAATINAAYALGKSHTQGSLEVGKQGDLIIINSPRWEHLIYQFGGHHELIDYVIAKGKVIYKK.

Residues Tyr-159 and His-192 each coordinate 4-imidazolone-5-propanoate. Tyr-159 is an N-formimidoyl-L-glutamate binding site. His-260 serves as a coordination point for Fe(3+). Zn(2+) is bound at residue His-260. Glu-263 is a binding site for 4-imidazolone-5-propanoate. Asp-334 is a binding site for Fe(3+). Asp-334 contacts Zn(2+). Asn-336 is a binding site for N-formimidoyl-L-glutamate.

It belongs to the metallo-dependent hydrolases superfamily. HutI family. Zn(2+) is required as a cofactor. It depends on Fe(3+) as a cofactor.

It catalyses the reaction 4-imidazolone-5-propanoate + H2O = N-formimidoyl-L-glutamate. It participates in amino-acid degradation; L-histidine degradation into L-glutamate; N-formimidoyl-L-glutamate from L-histidine: step 3/3. The polypeptide is Probable imidazolonepropionase (AMDHD1) (Bos taurus (Bovine)).